The chain runs to 131 residues: Small ribosomal subunit protein uS8 (131 aa).

Belongs to the universal ribosomal protein uS8 family. Part of the 30S ribosomal subunit. Contacts proteins S5 and S12.

Its function is as follows. One of the primary rRNA binding proteins, it binds directly to 16S rRNA central domain where it helps coordinate assembly of the platform of the 30S subunit. This is Small ribosomal subunit protein uS8 from Wolinella succinogenes (strain ATCC 29543 / DSM 1740 / CCUG 13145 / JCM 31913 / LMG 7466 / NCTC 11488 / FDC 602W) (Vibrio succinogenes).